The following is an 860-amino-acid chain: Leucine--tRNA ligase (860 aa).

The short motif at Pro42–His52 is the 'HIGH' region element. The short motif at Lys619 to Ser623 is the 'KMSKS' region element. An ATP-binding site is contributed by Lys622.

This sequence belongs to the class-I aminoacyl-tRNA synthetase family.

The protein resides in the cytoplasm. The catalysed reaction is tRNA(Leu) + L-leucine + ATP = L-leucyl-tRNA(Leu) + AMP + diphosphate. This chain is Leucine--tRNA ligase, found in Klebsiella pneumoniae subsp. pneumoniae (strain ATCC 700721 / MGH 78578).